Consider the following 409-residue polypeptide: SPI-1 type 3 secretion system translocon protein SctB (409 aa).

Residues isoleucine 119 to leucine 140 traverse the membrane as a helical segment. Residues glutamate 350–serine 368 show a composition bias toward polar residues. The interval glutamate 350–serine 378 is disordered.

It belongs to the SctB/SipC family. In terms of assembly, the core secretion machinery of the T3SS is composed of approximately 20 different proteins, including cytoplasmic components, a base, an export apparatus and a needle. This subunit is involved in the formation of a pore, called the translocon, in host membrane.

The protein localises to the secreted. It localises to the host membrane. Component of the type III secretion system 1 (SPI-1 T3SS), also called injectisome, which is used to inject bacterial effector proteins into eukaryotic host cells. SipB/SctE1 and SipC/SctB1 are inserted into the host membrane where they form a pore and allow the translocation of effector proteins into the cytosol of target cells. The chain is SPI-1 type 3 secretion system translocon protein SctB from Salmonella typhi.